The primary structure comprises 65 residues: Large ribosomal subunit protein bL35 (65 aa).

The protein belongs to the bacterial ribosomal protein bL35 family.

This Polynucleobacter asymbioticus (strain DSM 18221 / CIP 109841 / QLW-P1DMWA-1) (Polynucleobacter necessarius subsp. asymbioticus) protein is Large ribosomal subunit protein bL35.